The chain runs to 490 residues: Vacuolar amino acid transporter 7 (490 aa).

Residues 1–6 lie on the Cytoplasmic side of the membrane; that stretch reads MEATSS. A helical transmembrane segment spans residues 7-27; it reads ALSSTANLVKTIVGAGTLAIP. Over 28 to 34 the chain is Vacuolar; sequence YSFKSDG. Residues 35–55 traverse the membrane as a helical segment; that stretch reads VLVGVILTLLAAVTSGLGLFV. At 56–84 the chain is on the cytoplasmic side; that stretch reads LSKCSKTLINPRNSSFFTLCMLTYPTLAP. The chain crosses the membrane as a helical span at residues 85–105; the sequence is IFDLAMIVQCFGVGLSYLVLI. At 106–108 the chain is on the vacuolar side; sequence GDL. The chain crosses the membrane as a helical span at residues 109–129; sequence FPGLFGGERNYWIIASAVIII. Residues 130–143 lie on the Cytoplasmic side of the membrane; it reads PLCLVKKLDQLKYS. The helical transmembrane segment at 144-164 threads the bilayer; sequence SILGLFALAYISILVFSHFVF. Residues 165-190 are Vacuolar-facing; it reads ELGKGELTNILRNDICWWKIHDFKGL. A helical membrane pass occupies residues 191 to 211; sequence LSTFSIIIFAFTGSMNLFPMI. Residues 212-221 lie on the Cytoplasmic side of the membrane; sequence NELKDNSMEN. The chain crosses the membrane as a helical span at residues 222 to 242; sequence ITFVINNSISLSTALFLIVGL. The Vacuolar segment spans residues 243–264; sequence SGYLTFGNETLGNLMLNYDPNS. A helical transmembrane segment spans residues 265–285; it reads IWIVIGKFCLGSMLILSFPLL. Over 286–397 the chain is Cytoplasmic; it reads FHPLRIAVNN…FVKSRFYWIT (112 aa). The disordered stretch occupies residues 355–374; that stretch reads NGNFDNGSIESQENNNDERG. A compositionally biased stretch (polar residues) spans 357–368; the sequence is NFDNGSIESQEN. The chain crosses the membrane as a helical span at residues 398–418; the sequence is ALLLISMYTLALSVQSFALVL. Topologically, residues 419-428 are vacuolar; the sequence is SFVGATGSTS. Residues 429–449 traverse the membrane as a helical segment; that stretch reads ISFTLPGLLGYKLIGLDSLAI. Residues 450–463 lie on the Cytoplasmic side of the membrane; the sequence is GKMIPPKDRFYKRC. Residues 464–484 traverse the membrane as a helical segment; the sequence is SLLLVFYGLSVMFLSLYVTVF. Topologically, residues 485–490 are vacuolar; that stretch reads NRSDEA.

This sequence belongs to the amino acid/polyamine transporter 2 family.

It localises to the vacuole membrane. Probable amino acid transporter of unknown specificity. In Saccharomyces cerevisiae (strain ATCC 204508 / S288c) (Baker's yeast), this protein is Vacuolar amino acid transporter 7 (AVT7).